Here is a 309-residue protein sequence, read N- to C-terminus: Taste receptor type 2 member 8 (309 aa).

The Extracellular segment spans residues 1-7 (MFSPADN). A helical transmembrane segment spans residues 8-28 (IFIILITGEFILGILGNGYIA). Topologically, residues 29–50 (LVNWIDWIKKKKISTIDYILTN) are cytoplasmic. The chain crosses the membrane as a helical span at residues 51–71 (LVISRICLISVMVVNGIVIAV). At 72 to 82 (YPDVYTKSKLQ) the chain is on the extracellular side. The chain crosses the membrane as a helical span at residues 83–103 (IAICTFWTFANYLNMWITTCL). The Cytoplasmic segment spans residues 104 to 131 (NVFYFLKIANSSHPLFLWLKQKIDMVVR). Residues 132–152 (WILLGCFAISLLVSLIAAIVL) form a helical membrane-spanning segment. Over 153-184 (SYDYRFHAIAKHKRNITEMFHVSKRPYFEPLT) the chain is Extracellular. N167 carries N-linked (GlcNAc...) asparagine glycosylation. Residues 185-205 (LFNLFAIVPFIVSLISFFLLV) traverse the membrane as a helical segment. The Cytoplasmic segment spans residues 206 to 239 (RSLWRHTKQIKLYATGGRDPSTEVHVRAIKTMTS). Residues 240–260 (FIFLFFLYYISSILVTFSYLM) form a helical membrane-spanning segment. The Extracellular portion of the chain corresponds to 261–266 (TKYKLA). A helical membrane pass occupies residues 267–287 (VEFGEIVAILYPLGHSLILIV). The Cytoplasmic portion of the chain corresponds to 288-309 (LNNKLRQTFVRMLTCRKIACVI).

Belongs to the G-protein coupled receptor T2R family.

Its subcellular location is the membrane. Functionally, receptor that may play a role in the perception of bitterness and is gustducin-linked. May play a role in sensing the chemical composition of the gastrointestinal content. The activity of this receptor may stimulate alpha gustducin, mediate PLC-beta-2 activation and lead to the gating of TRPM5. This Gorilla gorilla gorilla (Western lowland gorilla) protein is Taste receptor type 2 member 8 (TAS2R8).